Here is a 390-residue protein sequence, read N- to C-terminus: Transforming growth factor beta-1 proprotein (390 aa).

A signal peptide spans 1-29 (MPPSRLRLLPLLLPLLWLLVLAPGRPASG). Residues 30–74 (LSTCKTIDMELVKRKRIEAIRGQILSKLRLASPPSQGDVPPGPLP) are straightjacket domain. The arm domain stretch occupies residues 75–271 (EAVLALYNST…ATPLERAQHL (197 aa)). Asn-82, Asn-136, and Asn-176 each carry an N-linked (GlcNAc...) asparagine glycan. The tract at residues 226–252 (DSKDNTLRVEINGIGPKRRGDLAAIHG) is bowtie tail. Positions 244-246 (RGD) match the Cell attachment site motif. 4 cysteine pairs are disulfide-bonded: Cys-285–Cys-294, Cys-293–Cys-356, Cys-322–Cys-387, and Cys-326–Cys-389.

It belongs to the TGF-beta family. In terms of assembly, homodimer; disulfide-linked. Interacts with the serine proteases, HTRA1 and HTRA3: the interaction with either inhibits TGFB1-mediated signaling and the HTRA protease activity is required for this inhibition. May interact with THSD4; this interaction may lead to sequestration by FBN1 microfibril assembly and attenuation of TGFB signaling. Interacts with CD109, DPT and ASPN. Interacts with EFEMP2. Interacts with TSKU; the interaction contributes to regulation of the hair cycle. Interacts with TGFBR3. As to quaternary structure, homodimer; disulfide-linked. Interacts with transforming growth factor beta-1 (TGF-beta-1) chain; interaction is non-covalent and maintains TGF-beta-1 in a latent state; each latency-associated peptide (LAP) monomer interacts with TGF-beta-1 in the other monomer. Interacts with LTBP1; leading to regulation of TGF-beta-1 activation. Interacts with LRRC32/GARP; leading to regulation of TGF-beta-1 activation on the surface of activated regulatory T-cells (Tregs). Interacts with LRRC33/NRROS; leading to regulation of TGF-beta-1 in macrophages and microglia. Interacts (via cell attachment site) with integrins ITGAV and ITGB6 (ITGAV:ITGB6), leading to release of the active TGF-beta-1. Interacts with NREP; the interaction results in a decrease in TGFB1 autoinduction. Interacts with HSP90AB1; inhibits latent TGFB1 activation. Homodimer; disulfide-linked. Interacts with TGF-beta receptors (TGFBR1 and TGFBR2), leading to signal transduction. Post-translationally, transforming growth factor beta-1 proprotein: The precursor proprotein is cleaved in the Golgi apparatus by FURIN to form Transforming growth factor beta-1 (TGF-beta-1) and Latency-associated peptide (LAP) chains, which remain non-covalently linked, rendering TGF-beta-1 inactive. In terms of processing, N-glycosylated. Deglycosylation leads to activation of Transforming growth factor beta-1 (TGF-beta-1); mechanisms triggering deglycosylation-driven activation of TGF-beta-1 are however unclear.

It localises to the secreted. The protein resides in the extracellular space. Its subcellular location is the extracellular matrix. Functionally, transforming growth factor beta-1 proprotein: Precursor of the Latency-associated peptide (LAP) and Transforming growth factor beta-1 (TGF-beta-1) chains, which constitute the regulatory and active subunit of TGF-beta-1, respectively. Its function is as follows. Required to maintain the Transforming growth factor beta-1 (TGF-beta-1) chain in a latent state during storage in extracellular matrix. Associates non-covalently with TGF-beta-1 and regulates its activation via interaction with 'milieu molecules', such as LTBP1, LRRC32/GARP and LRRC33/NRROS, that control activation of TGF-beta-1. Interaction with LRRC33/NRROS regulates activation of TGF-beta-1 in macrophages and microglia. Interaction with LRRC32/GARP controls activation of TGF-beta-1 on the surface of activated regulatory T-cells (Tregs). Interaction with integrins (ITGAV:ITGB6 or ITGAV:ITGB8) results in distortion of the Latency-associated peptide chain and subsequent release of the active TGF-beta-1. In terms of biological role, multifunctional protein that regulates the growth and differentiation of various cell types and is involved in various processes, such as normal development, immune function, microglia function and responses to neurodegeneration. Activation into mature form follows different steps: following cleavage of the proprotein in the Golgi apparatus, Latency-associated peptide (LAP) and Transforming growth factor beta-1 (TGF-beta-1) chains remain non-covalently linked rendering TGF-beta-1 inactive during storage in extracellular matrix. At the same time, LAP chain interacts with 'milieu molecules', such as LTBP1, LRRC32/GARP and LRRC33/NRROS that control activation of TGF-beta-1 and maintain it in a latent state during storage in extracellular milieus. TGF-beta-1 is released from LAP by integrins (ITGAV:ITGB6 or ITGAV:ITGB8): integrin-binding to LAP stabilizes an alternative conformation of the LAP bowtie tail and results in distortion of the LAP chain and subsequent release of the active TGF-beta-1. Once activated following release of LAP, TGF-beta-1 acts by binding to TGF-beta receptors (TGFBR1 and TGFBR2), which transduce signal. While expressed by many cells types, TGF-beta-1 only has a very localized range of action within cell environment thanks to fine regulation of its activation by Latency-associated peptide chain (LAP) and 'milieu molecules'. Plays an important role in bone remodeling: acts as a potent stimulator of osteoblastic bone formation, causing chemotaxis, proliferation and differentiation in committed osteoblasts. Can promote either T-helper 17 cells (Th17) or regulatory T-cells (Treg) lineage differentiation in a concentration-dependent manner. At high concentrations, leads to FOXP3-mediated suppression of RORC and down-regulation of IL-17 expression, favoring Treg cell development. At low concentrations in concert with IL-6 and IL-21, leads to expression of the IL-17 and IL-23 receptors, favoring differentiation to Th17 cells. Stimulates sustained production of collagen through the activation of CREB3L1 by regulated intramembrane proteolysis (RIP). Mediates SMAD2/3 activation by inducing its phosphorylation and subsequent translocation to the nucleus. Positively regulates odontoblastic differentiation in dental papilla cells, via promotion of IPO7-mediated translocation of phosphorylated SMAD2 to the nucleus and subsequent transcription of target genes. Can induce epithelial-to-mesenchymal transition (EMT) and cell migration in various cell types. This is Transforming growth factor beta-1 proprotein (TGFB1) from Cavia porcellus (Guinea pig).